A 237-amino-acid chain; its full sequence is B3 domain-containing protein Os06g0194400 (237 aa).

2 disordered regions span residues 1–23 and 38–82; these read MIEA…RQVE and SAAV…LPEK. Residues 139–230 constitute a DNA-binding region (TF-B3); that stretch reads FVKPMLQSHV…KFKVYIIRAS (92 aa).

The protein localises to the nucleus. The chain is B3 domain-containing protein Os06g0194400 from Oryza sativa subsp. japonica (Rice).